The following is a 290-amino-acid chain: UPF0761 membrane protein YihY (290 aa).

6 helical membrane-spanning segments follow: residues 44–64 (LLSL…FPMF), 104–124 (VGAC…DSAL), 140–160 (FAVY…SLAI), 183–203 (IFPL…VPTI), 210–230 (AIVG…GFAL), and 244–264 (VLAV…IVLL).

It belongs to the UPF0761 family.

The protein resides in the cell inner membrane. This is UPF0761 membrane protein YihY from Escherichia coli O1:K1 / APEC.